Reading from the N-terminus, the 111-residue chain is 2Fe-2S ferredoxin (111 aa).

A 2Fe-2S ferredoxin-type domain is found at 1-104; it reads MPKVLFLPHK…DIEVEIPLYN (104 aa). [2Fe-2S] cluster-binding residues include Cys42, Cys48, Cys51, and Cys87.

This sequence belongs to the adrenodoxin/putidaredoxin family. Requires [2Fe-2S] cluster as cofactor.

Ferredoxin are iron-sulfur proteins that transfer electrons in a wide variety of metabolic reactions. The chain is 2Fe-2S ferredoxin (fdx) from Buchnera aphidicola subsp. Acyrthosiphon pisum (strain APS) (Acyrthosiphon pisum symbiotic bacterium).